We begin with the raw amino-acid sequence, 986 residues long: Regulator of telomere elongation helicase 1 homolog (986 aa).

Residues 7–326 (AGIPVHFPFE…KEMLLELEKA (320 aa)) enclose the Helicase ATP-binding domain. An ATP-binding site is contributed by 42–49 (SPTGTGKT). 4 residues coordinate [4Fe-4S] cluster: Cys148, Cys166, Cys175, and Cys211. A DEAH box motif is present at residues 254-257 (DEGH). Thr875 is subject to Phosphothreonine.

This sequence belongs to the helicase family. RAD3/XPD subfamily.

The protein resides in the nucleus. It catalyses the reaction ATP + H2O = ADP + phosphate + H(+). A probable ATP-dependent DNA helicase implicated in DNA repair and the maintenance of genomic stability. Acts as an anti-recombinase to counteract toxic recombination and limit crossover during meiosis. Regulates meiotic recombination and crossover homeostasis by physically dissociating strand invasion events and thereby promotes noncrossover repair by meiotic synthesis dependent strand annealing (SDSA) as well as disassembly of D loop recombination intermediates. The chain is Regulator of telomere elongation helicase 1 homolog from Drosophila grimshawi (Hawaiian fruit fly).